The primary structure comprises 1025 residues: Multidrug resistance protein MdtC (1025 aa).

12 helical membrane passes run 3 to 23 (FFAL…AITL), 333 to 353 (EVEQ…FLFL), 360 to 380 (IIPA…MYLC), 387 to 407 (LSLM…IVVL), 431 to 451 (VGFT…PLLL), 463 to 483 (FAVT…TLTP), 528 to 548 (LVGA…ISIP), 853 to 873 (VILI…LYES), 875 to 895 (VHPL…LLAL), 897 to 917 (LFNA…IGIV), 953 to 973 (PIMM…LSGG), and 984 to 1004 (ITIV…TPVV).

It belongs to the resistance-nodulation-cell division (RND) (TC 2.A.6) family. MdtC subfamily. As to quaternary structure, part of a tripartite efflux system composed of MdtA, MdtB and MdtC. MdtC forms a heteromultimer with MdtB.

Its subcellular location is the cell inner membrane. The MdtABC tripartite complex confers resistance against novobiocin and deoxycholate. The chain is Multidrug resistance protein MdtC from Escherichia coli O81 (strain ED1a).